Consider the following 60-residue polypeptide: Cecropin-B1 (60 aa).

An N-terminal signal peptide occupies residues 1-24 (MNFSKVFALVLLIGLVLLTGHTEA).

The protein belongs to the cecropin family.

The protein localises to the secreted. Putative antimicrobial peptide. Partially neutralizes lipopolysaccharides (LPS). Exhibits anti-inflammatory properties: inhibits LPS-induced iNOS/NOS2 transcription, nitric oxide (NO) and pro-inflammatory cytokine production in mouse macrophages and human peripheral blood mononuclear cells (PBMCs); inhibits LPS-induced activation of MAPK and NF-kappa-B signaling pathways in mouse macrophages. The polypeptide is Cecropin-B1 (Aedes aegypti (Yellowfever mosquito)).